Reading from the N-terminus, the 366-residue chain is Beta sliding clamp (366 aa).

Belongs to the beta sliding clamp family. In terms of assembly, forms a ring-shaped head-to-tail homodimer around DNA which binds and tethers DNA polymerases and other proteins to the DNA. The DNA replisome complex has a single clamp-loading complex (3 tau and 1 each of delta, delta', psi and chi subunits) which binds 3 Pol III cores (1 core on the leading strand and 2 on the lagging strand) each with a beta sliding clamp dimer. Additional proteins in the replisome are other copies of gamma, psi and chi, Ssb, DNA helicase and RNA primase.

It localises to the cytoplasm. Its function is as follows. Confers DNA tethering and processivity to DNA polymerases and other proteins. Acts as a clamp, forming a ring around DNA (a reaction catalyzed by the clamp-loading complex) which diffuses in an ATP-independent manner freely and bidirectionally along dsDNA. Initially characterized for its ability to contact the catalytic subunit of DNA polymerase III (Pol III), a complex, multichain enzyme responsible for most of the replicative synthesis in bacteria; Pol III exhibits 3'-5' exonuclease proofreading activity. The beta chain is required for initiation of replication as well as for processivity of DNA replication. In Salmonella typhimurium (strain LT2 / SGSC1412 / ATCC 700720), this protein is Beta sliding clamp (dnaN).